The sequence spans 273 residues: Formamidopyrimidine-DNA glycosylase (273 aa).

The active-site Schiff-base intermediate with DNA is the P2. Catalysis depends on E3, which acts as the Proton donor. Catalysis depends on K57, which acts as the Proton donor; for beta-elimination activity. Residues H91, R110, and K151 each contribute to the DNA site. The FPG-type zinc-finger motif lies at 236–270; the sequence is QVYGRKDEACNDCGTIIEAKVIGQRNSYFCPHCQM. R260 acts as the Proton donor; for delta-elimination activity in catalysis.

It belongs to the FPG family. Monomer. Zn(2+) serves as cofactor.

It carries out the reaction Hydrolysis of DNA containing ring-opened 7-methylguanine residues, releasing 2,6-diamino-4-hydroxy-5-(N-methyl)formamidopyrimidine.. The catalysed reaction is 2'-deoxyribonucleotide-(2'-deoxyribose 5'-phosphate)-2'-deoxyribonucleotide-DNA = a 3'-end 2'-deoxyribonucleotide-(2,3-dehydro-2,3-deoxyribose 5'-phosphate)-DNA + a 5'-end 5'-phospho-2'-deoxyribonucleoside-DNA + H(+). Involved in base excision repair of DNA damaged by oxidation or by mutagenic agents. Acts as a DNA glycosylase that recognizes and removes damaged bases. Has a preference for oxidized purines, such as 7,8-dihydro-8-oxoguanine (8-oxoG). Has AP (apurinic/apyrimidinic) lyase activity and introduces nicks in the DNA strand. Cleaves the DNA backbone by beta-delta elimination to generate a single-strand break at the site of the removed base with both 3'- and 5'-phosphates. The polypeptide is Formamidopyrimidine-DNA glycosylase (Actinobacillus pleuropneumoniae serotype 5b (strain L20)).